The chain runs to 613 residues: Potassium voltage-gated channel subfamily A member 5 (613 aa).

The interval methionine 1–glutamate 108 is disordered. The tetramerization domain stretch occupies residues methionine 1–glutamate 211. Over methionine 1–glycine 247 the chain is Cytoplasmic. Basic and acidic residues predominate over residues glycine 45–serine 62. 2 consecutive repeat copies span residues aspartate 61–proline 71 and aspartate 72–proline 82. The segment at aspartate 61–proline 82 is 2 X 11 AA tandem repeat of D-[SP]-G-V-R-P-L-P-P-L-P. The segment covering proline 66 to glutamate 83 has biased composition (pro residues). The segment covering glutamate 84–proline 93 has biased composition (basic and acidic residues). Lysine 221 participates in a covalent cross-link: Glycyl lysine isopeptide (Lys-Gly) (interchain with G-Cter in SUMO). Residues serine 248 to leucine 269 traverse the membrane as a helical segment. Residues glutamate 270–proline 323 lie on the Extracellular side of the membrane. The disordered stretch occupies residues leucine 282–methionine 304. A compositionally biased stretch (pro residues) spans proline 285 to alanine 295. A helical membrane pass occupies residues phenylalanine 324 to alanine 345. The S-palmitoyl cysteine moiety is linked to residue cysteine 346. Topologically, residues cysteine 346 to isoleucine 356 are cytoplasmic. A helical membrane pass occupies residues methionine 357–alanine 377. Over glutamate 378–serine 395 the chain is Extracellular. Residues leucine 396–histidine 416 traverse the membrane as a helical; Voltage-sensor segment. Topologically, residues serine 417–methionine 431 are cytoplasmic. An S4-S5 linker region spans residues lysine 418 to methionine 431. A helical membrane pass occupies residues arginine 432–tyrosine 453. At phenylalanine 454–isoleucine 467 the chain is on the extracellular side. Residues proline 468 to threonine 479 constitute an intramembrane region (helical). The Selectivity filter motif lies at threonine 480–aspartate 485. An intramembrane segment occupies threonine 480–arginine 487. The Extracellular segment spans residues proline 488–lysine 494. A helical transmembrane segment spans residues isoleucine 495 to tyrosine 523. The Cytoplasmic segment spans residues histidine 524–leucine 613. A disordered region spans residues proline 532–serine 559. A Glycyl lysine isopeptide (Lys-Gly) (interchain with G-Cter in SUMO) cross-link involves residue lysine 536. Serine 557 carries the phosphoserine; by PKA modification. Residues threonine 611 to leucine 613 carry the PDZ-binding motif.

It belongs to the potassium channel family. A (Shaker) (TC 1.A.1.2) subfamily. Kv1.5/KCNA5 sub-subfamily. As to quaternary structure, homotetramer and heterotetramer of potassium channel proteins. Interacts with DLG1, which enhances channel currents. Forms a ternary complex with DLG1 and CAV3. Interacts with KCNAB1. Interacts with UBE2I. Interacts with XIRP2; the interaction is required for normal action potential configuration in the heart. Glycosylated. Post-translationally, sumoylated on Lys-221, and Lys-536, preferentially with SUMO3. Sumoylation regulates the voltage sensitivity of the channel. Pancreatic islets and insulinoma.

Its subcellular location is the cell membrane. The enzyme catalyses K(+)(in) = K(+)(out). Its activity is regulated as follows. Inhibited by 4-aminopyridine, nicotine, bepridil, correolide, and endothelin-1. In terms of biological role, voltage-gated potassium channel that mediates transmembrane potassium transport in excitable membranes. Forms tetrameric potassium-selective channels through which potassium ions pass in accordance with their electrochemical gradient. The channel alternates between opened and closed conformations in response to the voltage difference across the membrane. Can form functional homotetrameric channels and heterotetrameric channels that contain variable proportions of KCNA1, KCNA2, KCNA4, KCNA5, and possibly other family members as well; channel properties depend on the type of alpha subunits that are part of the channel. Channel properties are modulated by cytoplasmic beta subunits that regulate the subcellular location of the alpha subunits and promote rapid inactivation. Homotetrameric channels display rapid activation and slow inactivation. Required for normal electrical conduction including formation of the infranodal ventricular conduction system and normal action potential configuration, as a result of its interaction with XIRP2. May play a role in regulating the secretion of insulin in normal pancreatic islets. Its function is as follows. Exhibits a faster depolarization rate, reduced voltage-dependent recovery from inactivation and an excessive cumulative inactivation. In Homo sapiens (Human), this protein is Potassium voltage-gated channel subfamily A member 5 (KCNA5).